Reading from the N-terminus, the 561-residue chain is Asparagine synthetase [glutamine-hydrolyzing] (561 aa).

C2 functions as the For GATase activity in the catalytic mechanism. Positions 2-191 constitute a Glutamine amidotransferase type-2 domain; that stretch reads CGIWALFGSD…PGHYEVLDLK (190 aa). Residues 49 to 53, 75 to 77, and D97 contribute to the L-glutamine site; these read RLAVV and NGE. One can recognise an Asparagine synthetase domain in the interval 213–536; sequence HAIYDSVEKL…PGRADWLTHY (324 aa). ATP is bound by residues L256, I288, and 363–364; that span reads SG. K385 carries the N6-acetyllysine modification. Phosphothreonine is present on T545. The residue at position 557 (S557) is a Phosphoserine.

It catalyses the reaction L-aspartate + L-glutamine + ATP + H2O = L-asparagine + L-glutamate + AMP + diphosphate + H(+). It functions in the pathway amino-acid biosynthesis; L-asparagine biosynthesis; L-asparagine from L-aspartate (L-Gln route): step 1/1. The protein is Asparagine synthetase [glutamine-hydrolyzing] (Asns) of Rattus norvegicus (Rat).